Consider the following 214-residue polypeptide: Ribosomal RNA small subunit methyltransferase G (214 aa).

Residues glycine 72, phenylalanine 77, 125–126, and arginine 141 each bind S-adenosyl-L-methionine; that span reads VE.

Belongs to the methyltransferase superfamily. RNA methyltransferase RsmG family.

It is found in the cytoplasm. It carries out the reaction guanosine(527) in 16S rRNA + S-adenosyl-L-methionine = N(7)-methylguanosine(527) in 16S rRNA + S-adenosyl-L-homocysteine. Functionally, specifically methylates the N7 position of guanine in position 527 of 16S rRNA. This is Ribosomal RNA small subunit methyltransferase G from Sinorhizobium fredii (strain NBRC 101917 / NGR234).